A 165-amino-acid chain; its full sequence is Shikimate kinase (165 aa).

Position 12–17 (12–17) interacts with ATP; it reads GCGKST. A Mg(2+)-binding site is contributed by S16. D34, R57, and G79 together coordinate substrate. R116 is a binding site for ATP. R133 provides a ligand contact to substrate.

Belongs to the shikimate kinase family. Monomer. The cofactor is Mg(2+).

The protein localises to the cytoplasm. It catalyses the reaction shikimate + ATP = 3-phosphoshikimate + ADP + H(+). The protein operates within metabolic intermediate biosynthesis; chorismate biosynthesis; chorismate from D-erythrose 4-phosphate and phosphoenolpyruvate: step 5/7. Catalyzes the specific phosphorylation of the 3-hydroxyl group of shikimic acid using ATP as a cosubstrate. The polypeptide is Shikimate kinase (Clostridium botulinum (strain Alaska E43 / Type E3)).